Reading from the N-terminus, the 390-residue chain is Chorismate synthase 1 (390 aa).

Residues R39 and R45 each coordinate NADP(+). A disordered region spans residues 95–117 (EQEEKEMKRKVTKPRPGHADLNG). FMN-binding positions include 132–134 (RSS), 253–254 (NA), G298, 313–317 (KPIPT), and R339.

It belongs to the chorismate synthase family. In terms of assembly, homotetramer. FMNH2 is required as a cofactor.

The catalysed reaction is 5-O-(1-carboxyvinyl)-3-phosphoshikimate = chorismate + phosphate. It participates in metabolic intermediate biosynthesis; chorismate biosynthesis; chorismate from D-erythrose 4-phosphate and phosphoenolpyruvate: step 7/7. In terms of biological role, catalyzes the anti-1,4-elimination of the C-3 phosphate and the C-6 proR hydrogen from 5-enolpyruvylshikimate-3-phosphate (EPSP) to yield chorismate, which is the branch point compound that serves as the starting substrate for the three terminal pathways of aromatic amino acid biosynthesis. This reaction introduces a second double bond into the aromatic ring system. The chain is Chorismate synthase 1 from Bacillus cereus (strain ATCC 10987 / NRS 248).